A 434-amino-acid polypeptide reads, in one-letter code: Cytochrome c biogenesis protein CcsB (434 aa).

3 helical membrane passes run 15 to 35, 73 to 93, and 163 to 183; these read LRVAIVLLLLIAACSGLGTAI, SNWFLLLLAWLGLALLLCSLR, and VGPLLVHTGLIVFMVGAVVGA.

The protein belongs to the Ccs1/CcsB family. In terms of assembly, may interact with CcsA.

The protein resides in the cellular thylakoid membrane. Functionally, required during biogenesis of c-type cytochromes (cytochrome c6 and cytochrome f) at the step of heme attachment. This Synechococcus sp. (strain RCC307) protein is Cytochrome c biogenesis protein CcsB.